A 285-amino-acid chain; its full sequence is Glutamate racemase (285 aa).

Residues 28–29 (DS) and 60–61 (YG) each bind substrate. The active-site Proton donor/acceptor is the cysteine 92. 93–94 (NT) contacts substrate. UDP-N-acetyl-alpha-D-muramoyl-L-alanine contacts are provided by residues arginine 104 and 113-119 (GVVPAIK). Cysteine 204 (proton donor/acceptor) is an active-site residue. 205–206 (TH) contributes to the substrate binding site.

Belongs to the aspartate/glutamate racemases family. Monomer.

It carries out the reaction L-glutamate = D-glutamate. Its pathway is cell wall biogenesis; peptidoglycan biosynthesis. With respect to regulation, the low basal catalytic activity in increased 1000-fold in the presence of UDP-MurNAc-L-Ala, the product of the preceding enzyme in the peptidoglycan biosynthesis. Its function is as follows. Provides the (R)-glutamate required for cell wall biosynthesis. This Escherichia coli (strain K12) protein is Glutamate racemase.